We begin with the raw amino-acid sequence, 450 residues long: MRECISIHIGQAGIQVGNACWELYCLEHGIQPDGQMPSDKTVGGGDDAFNTFFSETGAGKHVPRAVFVDLEPTVIDEVRTGAYRQLFHPEQLISGKEDAANNFARGHYTIGKEIVDLCLDRIRKLADNCTGLQGFLVFNAVGGGTGSGLGSLLLERLSVDYGKKSKLGFTVYPSPQVSTSVVEPYNSVLSTHSLLEHTDVAVLLDNEAIYDICRRSLDIERPTYTNLNRLVSQVISSLTASLRFDGALNVDVTEFQTNLVPYPRIHFMLSSYAPVISAEKAYHEQLSVAEITNSAFEPSSMMAKCDPRHGKYMACCLMYRGDVVPKDVNAAVATIKTKRTIQFVDWCPTGFKCGINYQPPTVVPGGDLAKVQRAVCMISNSTSVAEVFSRIDHKFDLMYTKRAFVHWYVGEGMEEGEFSEAREDLAALEKDYEEVGAESGEGDEGDEEEY.

Gln-11 contacts GTP. N6-acetyllysine is present on Lys-40. The GTP site is built by Glu-71, Gly-144, Thr-145, Thr-179, Asn-206, and Asn-228. Glu-71 contributes to the Mg(2+) binding site. Residue Glu-254 is part of the active site. The disordered stretch occupies residues Asp-431–Tyr-450.

This sequence belongs to the tubulin family. In terms of assembly, dimer of alpha and beta chains. A typical microtubule is a hollow water-filled tube with an outer diameter of 25 nm and an inner diameter of 15 nM. Alpha-beta heterodimers associate head-to-tail to form protofilaments running lengthwise along the microtubule wall with the beta-tubulin subunit facing the microtubule plus end conferring a structural polarity. Microtubules usually have 13 protofilaments but different protofilament numbers can be found in some organisms and specialized cells. Requires Mg(2+) as cofactor. In terms of processing, undergoes a tyrosination/detyrosination cycle, the cyclic removal and re-addition of a C-terminal tyrosine residue by the enzymes tubulin tyrosine carboxypeptidase (TTCP) and tubulin tyrosine ligase (TTL), respectively. Post-translationally, acetylation of alpha chains at Lys-40 stabilizes microtubules and affects affinity and processivity of microtubule motors. This modification has a role in multiple cellular functions, ranging from cell motility, cell cycle progression or cell differentiation to intracellular trafficking and signaling.

The protein resides in the cytoplasm. The protein localises to the cytoskeleton. The catalysed reaction is GTP + H2O = GDP + phosphate + H(+). In terms of biological role, tubulin is the major constituent of microtubules, a cylinder consisting of laterally associated linear protofilaments composed of alpha- and beta-tubulin heterodimers. Microtubules grow by the addition of GTP-tubulin dimers to the microtubule end, where a stabilizing cap forms. Below the cap, tubulin dimers are in GDP-bound state, owing to GTPase activity of alpha-tubulin. This Gossypium hirsutum (Upland cotton) protein is Tubulin alpha-4 chain.